The following is a 417-amino-acid chain: Zinc-finger homeodomain protein 4 (417 aa).

Residues 1–12 (MVSILQLQTRTE) show a composition bias toward polar residues. Disordered regions lie at residues 1 to 22 (MVSI…ASAA) and 31 to 50 (RQQQ…FQER). Residues 13–22 (ASPASSASAA) show a composition bias toward low complexity. Over residues 36–46 (QEGEEEEEEFE) the composition is skewed to acidic residues. The segment at 145-194 (YRECLKNHAAAIGGNATDGCGEFMPSGEEGSLEALKCSACGCHRNFHRKE) adopts a ZF-HD dimerization-type; degenerate zinc-finger fold. Disordered regions lie at residues 281-309 (DEMD…FRTK) and 361-417 (NLAK…LKLE). Residues 286–298 (SGGGGGVGRGGGS) are compositionally biased toward gly residues. Positions 303 to 366 (KKRFRTKFTA…NNKHNLAKKP (64 aa)) form a DNA-binding region, homeobox. Residues 368–417 (PSSPPPPPQIPPMSMPPSPPPPQIPPMSMPPSPPPMPMPMPPSPPQLKLE) are compositionally biased toward pro residues.

In terms of assembly, homo- and heterodimer with other ZFHD proteins.

Its subcellular location is the nucleus. Putative transcription factor. In Oryza sativa subsp. japonica (Rice), this protein is Zinc-finger homeodomain protein 4 (ZHD4).